The chain runs to 137 residues: Small ribosomal subunit protein uS9 (137 aa).

The tract at residues 100–137 (ENRPPLKSEGYLTRDPRAKERKKYGLHKARKAPQYSKR) is disordered. Residues 118–137 (KERKKYGLHKARKAPQYSKR) show a composition bias toward basic residues.

It belongs to the universal ribosomal protein uS9 family.

This chain is Small ribosomal subunit protein uS9, found in Microcystis aeruginosa (strain NIES-843 / IAM M-2473).